The chain runs to 639 residues: Sperm-associated antigen 16 protein (639 aa).

Positions 146–218 (DVYSQVMLLE…GLKLHYASYE (73 aa)) form a coiled coil. The tract at residues 280–333 (RESGDRAGHSCEKENSSEGPTQKSLREAREEVGYKSKLKNEKKDSEFPVDMQPD) is disordered. 2 stretches are compositionally biased toward basic and acidic residues: residues 281-295 (ESGDRAGHSCEKENS) and 303-325 (SLREAREEVGYKSKLKNEKKDSE). 7 WD repeats span residues 358-397 (LHELPVSCIVMHPCRDYLISCSEDRLWKMVGLPQGNVLLT), 400-439 (GHTDWLSGCCFHPSGSKLATSSGDSTIKLWDLNKGECTLT), 442-481 (GHNHAVWSCTWHSCGDFVASASLDMTSKIWDVNSERCRYT), 484-523 (GHTDSVNSIEFFPFSNILLTASADKTLSVWDARTGKCEQS), 526-565 (GHMHSVNDATFTPRGHIIASCDARGVTKLWDFRKLIPIVS), 568-608 (VGPS…HKLV), and 609-639 (GHESEVHSVVFSHLGENLYSGGSDGTIRLWI).

In terms of assembly, interacts with SPAG6 and STK36. Post-translationally, phosphorylated by TSSK2. In terms of tissue distribution, expressed in testis.

Its subcellular location is the cytoplasm. It localises to the cytoskeleton. The protein localises to the cilium axoneme. The protein resides in the flagellum axoneme. It is found in the cell projection. Its subcellular location is the cilium. It localises to the flagellum. Its function is as follows. Necessary for sperm flagellar function. Plays a role in motile ciliogenesis. May help to recruit STK36 to the cilium or apical surface of the cell to initiate subsequent steps of construction of the central pair apparatus of motile cilia. This chain is Sperm-associated antigen 16 protein (Spag16), found in Mus musculus (Mouse).